The following is a 601-amino-acid chain: CDPK-related kinase 5 (601 aa).

Positions 1–19 (MGLCTSKPNSSNSDQTPAR) are enriched in polar residues. Disordered regions lie at residues 1 to 55 (MGLC…KSPF) and 70 to 98 (KKTPARSPATNSTNSTPKRFFKRPFPPPS). Gly-2 carries N-myristoyl glycine lipidation. The span at 26-35 (SESVKPSSSS) shows a compositional bias: low complexity. Over residues 36-48 (VNGEDQCVTTTNN) the composition is skewed to polar residues. Positions 148-410 (YELGDEVGRG…AAQALSHPWI (263 aa)) constitute a Protein kinase domain. ATP is bound by residues 154–162 (VGRGHFGYT) and Lys-180. Residue Asp-276 is the Proton acceptor of the active site. Ser-316 is modified (phosphoserine). The segment at 415-445 (DAKVPMDILVFKLMRAYLRSSSLRKAALRAL) is autoinhibitory domain. Positions 434–454 (SSSLRKAALRALSKTLTVDEL) are calmodulin binding (CaMBD). 4 consecutive EF-hand domains span residues 452–488 (DELFYLREQFALLEPSKNGTISLENIKSALMKMATDA), 489–524 (MKDSRIPEFLGQLSALQYRRMDFEEFCAAALSVHQL), 525–564 (EALDRWEQHARCAYELFEKEGNRPIMIDELASELGLGPSV), and 567–596 (HAVLHDWLRHTDGKLSFLGFVKLLHGVSSR). 10 residues coordinate Ca(2+): Ser-467, Asn-469, Thr-471, Asn-476, Arg-508, Glu-513, Asn-546, Glu-553, Asp-578, and Lys-580. Ser-582 carries the phosphoserine modification.

This sequence belongs to the protein kinase superfamily. Ser/Thr protein kinase family. CDPK subfamily. In terms of assembly, binds calmodulin (CaM) in a calcium-dependent manner.

It is found in the membrane. It carries out the reaction L-seryl-[protein] + ATP = O-phospho-L-seryl-[protein] + ADP + H(+). The enzyme catalyses L-threonyl-[protein] + ATP = O-phospho-L-threonyl-[protein] + ADP + H(+). With respect to regulation, activated by calcium and calmodulin. Autophosphorylation may play an important role in the regulation of the kinase activity. Functionally, may play a role in signal transduction pathways that involve calcium as a second messenger. This is CDPK-related kinase 5 (CRK5) from Arabidopsis thaliana (Mouse-ear cress).